The primary structure comprises 197 residues: Protocatechuate 3,4-dioxygenase alpha chain (197 aa).

R130 lines the 3,4-dihydroxybenzoate pocket.

This sequence belongs to the intradiol ring-cleavage dioxygenase family. The enzyme is an oligomer of 12 copies of the alpha and beta chains. Requires Fe(3+) as cofactor.

It catalyses the reaction 3,4-dihydroxybenzoate + O2 = 3-carboxy-cis,cis-muconate + 2 H(+). Its pathway is aromatic compound metabolism; beta-ketoadipate pathway; 3-carboxy-cis,cis-muconate from 3,4-dihydroxybenzoate: step 1/1. Plays an essential role in the utilization of numerous aromatic and hydroaromatic compounds via the beta-ketoadipate pathway. The polypeptide is Protocatechuate 3,4-dioxygenase alpha chain (pcaG) (Burkholderia cepacia (Pseudomonas cepacia)).